The following is a 420-amino-acid chain: Serine--tRNA ligase (420 aa).

Position 229–231 (229–231 (TAE)) interacts with L-serine. 260 to 262 (RSE) is an ATP binding site. Residue E283 coordinates L-serine. Position 347 to 350 (347 to 350 (EISS)) interacts with ATP. An L-serine-binding site is contributed by S381.

Belongs to the class-II aminoacyl-tRNA synthetase family. Type-1 seryl-tRNA synthetase subfamily. Homodimer. The tRNA molecule binds across the dimer.

The protein localises to the cytoplasm. The enzyme catalyses tRNA(Ser) + L-serine + ATP = L-seryl-tRNA(Ser) + AMP + diphosphate + H(+). It catalyses the reaction tRNA(Sec) + L-serine + ATP = L-seryl-tRNA(Sec) + AMP + diphosphate + H(+). It functions in the pathway aminoacyl-tRNA biosynthesis; selenocysteinyl-tRNA(Sec) biosynthesis; L-seryl-tRNA(Sec) from L-serine and tRNA(Sec): step 1/1. Catalyzes the attachment of serine to tRNA(Ser). Is also able to aminoacylate tRNA(Sec) with serine, to form the misacylated tRNA L-seryl-tRNA(Sec), which will be further converted into selenocysteinyl-tRNA(Sec). The sequence is that of Serine--tRNA ligase from Gluconobacter oxydans (strain 621H) (Gluconobacter suboxydans).